A 134-amino-acid polypeptide reads, in one-letter code: Small ribosomal subunit protein uS9 (134 aa).

Residues 114-134 (QKESKNFGGPGARAKYQKSYR) form a disordered region.

This sequence belongs to the universal ribosomal protein uS9 family.

The polypeptide is Small ribosomal subunit protein uS9 (Methanosarcina acetivorans (strain ATCC 35395 / DSM 2834 / JCM 12185 / C2A)).